A 154-amino-acid polypeptide reads, in one-letter code: Large ribosomal subunit protein uL30 (154 aa).

The interval 114–139 is disordered; it reads PVLRLHPPRGGHRGQKHPTAEGGQIG. Residues 119 to 129 show a composition bias toward basic residues; sequence HPPRGGHRGQK.

This sequence belongs to the universal ribosomal protein uL30 family. As to quaternary structure, part of the 50S ribosomal subunit.

In Haloquadratum walsbyi (strain DSM 16790 / HBSQ001), this protein is Large ribosomal subunit protein uL30.